The chain runs to 292 residues: Tyrosine isonitrile desaturase (292 aa).

Residues His110, Asp112, and His259 each contribute to the Fe cation site.

Belongs to the TfdA dioxygenase family. The cofactor is Fe(2+).

The catalysed reaction is (2S)-3-(4-hydroxyphenyl)-2-isocyanopropanoate + 2-oxoglutarate + O2 = (2E)-3-(4-hydroxyphenyl)-2-isocyanoprop-2-enoate + succinate + CO2 + H2O. Functionally, catalyzes the 2-oxoglutarate-dependent oxidation of tyrosine isonitrile. The protein is Tyrosine isonitrile desaturase of Erwinia amylovora (strain CFBP1430).